The following is a 167-amino-acid chain: Large ribosomal subunit protein uL10 (167 aa).

The protein belongs to the universal ribosomal protein uL10 family. Part of the ribosomal stalk of the 50S ribosomal subunit. The N-terminus interacts with L11 and the large rRNA to form the base of the stalk. The C-terminus forms an elongated spine to which L12 dimers bind in a sequential fashion forming a multimeric L10(L12)X complex.

Its function is as follows. Forms part of the ribosomal stalk, playing a central role in the interaction of the ribosome with GTP-bound translation factors. This chain is Large ribosomal subunit protein uL10, found in Paraburkholderia phytofirmans (strain DSM 17436 / LMG 22146 / PsJN) (Burkholderia phytofirmans).